A 943-amino-acid chain; its full sequence is Leucine--tRNA ligase (943 aa).

Positions 36-46 (PYPSGSMHVGH) match the 'HIGH' region motif. Residues 623–627 (KMSSS) carry the 'KMSKS' region motif. Residues 910-943 (ASEVVIHTDPEEAPGPEDRKAGARPLRPGIWLEE) are disordered. Over residues 915-930 (IHTDPEEAPGPEDRKA) the composition is skewed to basic and acidic residues.

The protein belongs to the class-I aminoacyl-tRNA synthetase family.

The protein localises to the cytoplasm. The catalysed reaction is tRNA(Leu) + L-leucine + ATP = L-leucyl-tRNA(Leu) + AMP + diphosphate. The polypeptide is Leucine--tRNA ligase (Methanopyrus kandleri (strain AV19 / DSM 6324 / JCM 9639 / NBRC 100938)).